A 285-amino-acid polypeptide reads, in one-letter code: Inositol oxygenase (285 aa).

R29 contributes to the substrate binding site. Phosphoserine is present on S33. Position 85–87 (85–87) interacts with substrate; the sequence is DES. Fe cation is bound by residues H98, H123, and D124. Substrate is bound by residues K127 and 141 to 142; that span reads GD. Residues H194, H220, and D253 each coordinate Fe cation. A substrate-binding site is contributed by 220–221; that stretch reads HS.

The protein belongs to the myo-inositol oxygenase family. It depends on Fe cation as a cofactor.

It is found in the cytoplasm. It carries out the reaction myo-inositol + O2 = D-glucuronate + H2O + H(+). Its pathway is polyol metabolism; myo-inositol degradation into D-glucuronate; D-glucuronate from myo-inositol: step 1/1. This Pongo abelii (Sumatran orangutan) protein is Inositol oxygenase (MIOX).